Here is a 551-residue protein sequence, read N- to C-terminus: Adenylyl cyclase-associated protein (551 aa).

The interval 34-55 (SGHKPLPNMHRPSRDSNSQTHN) is disordered. Serine 92 carries the post-translational modification Phosphoserine. Threonine 96 is subject to Phosphothreonine. The span at 288–300 (SASKTQAPSSGDS) shows a compositional bias: polar residues. 2 disordered regions span residues 288–333 (SASK…NKGD) and 348–395 (TSGL…PVKP). The span at 305–315 (LPPPPPPPPPS) shows a compositional bias: pro residues. The span at 352–361 (RKVDKSEMTH) shows a compositional bias: basic and acidic residues. A C-CAP/cofactor C-like domain is found at 395-529 (PPRIELENTK…EEGDYAERAV (135 aa)).

The protein belongs to the CAP family.

Its function is as follows. The N-terminal domain binds to adenylyl cyclase, thereby enabling adenylyl cyclase to be activated by upstream regulatory signals, such as Ras. The C-terminal domain is required for normal cellular morphology and growth control. The chain is Adenylyl cyclase-associated protein (cap1) from Schizosaccharomyces pombe (strain 972 / ATCC 24843) (Fission yeast).